A 610-amino-acid chain; its full sequence is Solute carrier family 23 member 3 (610 aa).

The span at 1 to 16 (MSRSPLNPSQLRSVGS) shows a compositional bias: polar residues. Residues 1–32 (MSRSPLNPSQLRSVGSQDALAPLPPPAPQNPS) are disordered. Residues 1–49 (MSRSPLNPSQLRSVGSQDALAPLPPPAPQNPSTHSWDPLCGSLPWGLSC) are Cytoplasmic-facing. A helical transmembrane segment spans residues 50 to 70 (LLALQHVLVMASLLCVSHLLL). Over 71-85 (LCSLSPGGLSYSPSQ) the chain is Extracellular. The helical transmembrane segment at 86–106 (LLASSFFSCGMSTILQTWMGS) threads the bilayer. The Cytoplasmic segment spans residues 107–164 (RLPLVQAPSLEFLIPALVLTSQKLPRAIQTPGNSSLMLHLCRGPSCHGLGHWNTSLQE). Residues 165-185 (VSGAVVVSGLLQGMMGLLGSP) form a helical membrane-spanning segment. At 186 to 187 (GH) the chain is on the extracellular side. The chain crosses the membrane as a helical span at residues 188-208 (VFPHCGPLVLAPSLVVAGLSA). Over 209-211 (HRE) the chain is Cytoplasmic. Residues 212 to 232 (VAQFCFTHWGLALLVILLMVV) form a helical membrane-spanning segment. At 233–266 (CSQHLGSCQFHVCPWRRASTSSTHTPLPVFRLLS) the chain is on the extracellular side. Residues 267–287 (VLIPVACVWIVSAFVGFSVIP) form a helical membrane-spanning segment. Residues 288–316 (QELSAPTKAPWIWLPHPGEWNWPLLTPRA) lie on the Cytoplasmic side of the membrane. The helical transmembrane segment at 317 to 337 (LAAGISMALAASTSSLGCYAL) threads the bilayer. The Extracellular portion of the chain corresponds to 338–355 (CGRLLHLPPPPPHACSRG). Residues 356-376 (LSLEGLGSVLAGLLGSPMGTA) form a helical membrane-spanning segment. Over 377 to 394 (SSFPNVGKVGLIQAGSQQ) the chain is Cytoplasmic. Residues 395–414 (VAHLVGLLCVGLGLSPRLAQ) traverse the membrane as a helical segment. Residues 415-423 (LLTTIPLPV) are Extracellular-facing. A helical transmembrane segment spans residues 424–446 (VGGVLGVTQAVVLSAGFSSFYLA). At 447-452 (DIDSGR) the chain is on the cytoplasmic side. The helical transmembrane segment at 453–472 (NIFIVGFSIFMALLLPRWFR) threads the bilayer. The Extracellular portion of the chain corresponds to 473–486 (EAPVLFSTGWSPLD). The chain crosses the membrane as a helical span at residues 487–507 (VLLHSLLTQPIFLAGLSGFLL). Residues 508–610 (ENTIPGTQLE…SSREGFRSQK (103 aa)) are Cytoplasmic-facing. The interval 571–610 (PEDPGDEEGGSSEPEEMADLLPGSGEPCPESSREGFRSQK) is disordered. The span at 573–588 (DPGDEEGGSSEPEEMA) shows a compositional bias: acidic residues. Basic and acidic residues predominate over residues 601–610 (SSREGFRSQK).

Belongs to the nucleobase:cation symporter-2 (NCS2) (TC 2.A.40) family.

The protein localises to the membrane. It carries out the reaction hypoxanthine(out) + Na(+)(out) = hypoxanthine(in) + Na(+)(in). Functionally, acts as a sodium-dependent hypoxanthine transporter. May show xanthine-hypoxanthine exchange activity. The polypeptide is Solute carrier family 23 member 3 (SLC23A3) (Homo sapiens (Human)).